Here is a 493-residue protein sequence, read N- to C-terminus: Solute carrier family 2, facilitated glucose transporter member 3 (493 aa).

Over 1-10 the chain is Cytoplasmic; it reads MGTAKVTPSL. The helical transmembrane segment at 11-32 threads the bilayer; that stretch reads VFAVTVATIGSFQFGYNTGVIN. The Extracellular segment spans residues 33–64; that stretch reads APETIIKDFLNYTLEERLEDLPREGLLTTLWS. The N-linked (GlcNAc...) asparagine glycan is linked to asparagine 43. The helical transmembrane segment at 65-85 threads the bilayer; sequence LCVAIFSVGGMIGSFSVGLFV. Residues 86-90 lie on the Cytoplasmic side of the membrane; it reads NRFGR. The helical transmembrane segment at 91-111 threads the bilayer; the sequence is RNSMLLVNLIAILGGCLMGFA. Residues 112 to 118 lie on the Extracellular side of the membrane; sequence KIAESVE. The helical transmembrane segment at 119–142 threads the bilayer; sequence MLILGRLIIGIFCGLCTGFVPMYI. Residues 143 to 153 lie on the Cytoplasmic side of the membrane; it reads GEVSPTALRGA. A helical transmembrane segment spans residues 154-174; it reads FGTLNQLGIVVGILVAQVFGL. Residue glutamine 159 participates in D-glucose binding. The Extracellular portion of the chain corresponds to 175–183; sequence DFILGSEEL. A helical membrane pass occupies residues 184-204; it reads WPGLLGLTIIPAILQSAALPF. Residues 205–269 lie on the Cytoplasmic side of the membrane; the sequence is CPESPRFLLI…LFKSPSYFQP (65 aa). Threonine 232 carries the post-translational modification Phosphothreonine. The chain crosses the membrane as a helical span at residues 270 to 290; sequence LLISVVLQLSQQFSGINAVFY. An important for selectivity against fructose region spans residues 277–279; the sequence is QLS. Residues 280–281 and asparagine 286 contribute to the D-glucose site; that span reads QQ. At 291–304 the chain is on the extracellular side; that stretch reads YSTGIFQDAGVQEP. A helical membrane pass occupies residues 305–325; the sequence is IYATIGAGVVNTIFTVVSLFL. D-glucose is bound at residue asparagine 315. Over 326–331 the chain is Cytoplasmic; it reads VERAGR. The chain crosses the membrane as a helical span at residues 332–352; it reads RTLHMIGLGGMAVCSVFMTIS. Topologically, residues 353–363 are extracellular; the sequence is LLLKDEYEAMS. The helical transmembrane segment at 364 to 389 threads the bilayer; sequence FVCIVAILVYVAFFEIGPGPIPWFIV. D-glucose-binding residues include glutamate 378 and tryptophan 386. Over 390-399 the chain is Cytoplasmic; it reads AELFSQGPRP. The chain crosses the membrane as a helical span at residues 400-420; that stretch reads AAMAVAGCSNWTSNFLVGMFF. The Extracellular segment spans residues 421 to 429; sequence PSAAAYLGA. The chain crosses the membrane as a helical span at residues 430 to 450; it reads YVFIIFAAFLVFFLIFTSFKV. At 451–493 the chain is on the cytoplasmic side; it reads PETKGRTFEDITRAFEGQAHSGKGSAGVELNSMQPVKETPGNA. Serine 471, serine 475, and serine 482 each carry phosphoserine. Threonine 489 carries the phosphothreonine modification.

The protein belongs to the major facilitator superfamily. Sugar transporter (TC 2.A.1.1) family. Glucose transporter subfamily. As to quaternary structure, interacts with SMIM43; the interaction may promote SLC2A3-mediated glucose transport to meet the energy needs of mesendoderm differentiation. Brain and osteoblastic cells (at protein level). Highly expressed in brain.

It is found in the cell membrane. The protein localises to the perikaryon. The protein resides in the cell projection. The enzyme catalyses D-glucose(out) = D-glucose(in). The catalysed reaction is D-galactose(in) = D-galactose(out). With respect to regulation, deoxyglucose transport is inhibited by D-glucose, D-galactose and maltose. Galactose transport is inhibited by D-glucose and maltose. Functionally, facilitative glucose transporter. Can also mediate the uptake of various other monosaccharides across the cell membrane. Mediates the uptake of glucose, 2-deoxyglucose, galactose, mannose, xylose and fucose, and probably also dehydroascorbate. Does not mediate fructose transport. Required for mesendoderm differentiation. The polypeptide is Solute carrier family 2, facilitated glucose transporter member 3 (Rattus norvegicus (Rat)).